Reading from the N-terminus, the 331-residue chain is D-lactate/D-glycerate dehydrogenase (331 aa).

NAD(+) contacts are provided by residues 154–155, Asp174, 205–206, Asn211, 232–234, and Asp258; these read RI, VP, and FAR. Residue Arg234 is part of the active site. Glu263 is an active-site residue. The Proton donor role is filled by His295.

Belongs to the D-isomer specific 2-hydroxyacid dehydrogenase family. In terms of assembly, homodimer.

It catalyses the reaction (R)-lactate + NAD(+) = pyruvate + NADH + H(+). The enzyme catalyses (R)-glycerate + NAD(+) = 3-hydroxypyruvate + NADH + H(+). In terms of biological role, has both D-lactate and D-glycerate dehydrogenase activities. Equally active on pyruvate and hydroxypyruvate. This Pediococcus acidilactici protein is D-lactate/D-glycerate dehydrogenase.